We begin with the raw amino-acid sequence, 140 residues long: Ribonuclease P protein component (140 aa).

The disordered stretch occupies residues 115 to 140; it reads RCKPGAPKPPPFKKRPNKSVKSNKQT.

Belongs to the RnpA family. In terms of assembly, consists of a catalytic RNA component (M1 or rnpB) and a protein subunit.

It catalyses the reaction Endonucleolytic cleavage of RNA, removing 5'-extranucleotides from tRNA precursor.. Functionally, RNaseP catalyzes the removal of the 5'-leader sequence from pre-tRNA to produce the mature 5'-terminus. It can also cleave other RNA substrates such as 4.5S RNA. The protein component plays an auxiliary but essential role in vivo by binding to the 5'-leader sequence and broadening the substrate specificity of the ribozyme. This chain is Ribonuclease P protein component, found in Pseudoalteromonas translucida (strain TAC 125).